The primary structure comprises 521 residues: Type II methyltransferase M.AluI (521 aa).

The region spanning 8-491 is the SAM-dependent MTase C5-type domain; sequence YSFVDLFAGI…REHVRRDRAL (484 aa). The active site involves Cys-84.

Belongs to the class I-like SAM-binding methyltransferase superfamily. C5-methyltransferase family.

The catalysed reaction is a 2'-deoxycytidine in DNA + S-adenosyl-L-methionine = a 5-methyl-2'-deoxycytidine in DNA + S-adenosyl-L-homocysteine + H(+). Its function is as follows. A methylase, recognizes the double-stranded sequence 5'-AGCT-3', methylates C-3 on both strands, and protects the DNA from cleavage by the AluI endonuclease. This chain is Type II methyltransferase M.AluI, found in Cellulosimicrobium cellulans (Arthrobacter luteus).